The primary structure comprises 786 residues: ATP-dependent RNA helicase SUPV3L1, mitochondrial (786 aa).

The N-terminal 22 residues, 1-22 (MSFSRALLWARLPAGRQAGHRA), are a transit peptide targeting the mitochondrion. Residue Lys99 is modified to N6-acetyllysine. A Helicase ATP-binding domain is found at 194–334 (DARAMQRKII…AIDLVMELMY (141 aa)). 207-214 (GPTNSGKT) contacts ATP. N6-acetyllysine is present on Lys220. The Helicase C-terminal domain maps to 353–518 (VLDHALESLD…GLHPTAEQIE (166 aa)). The segment at 650–786 (PDASLIRDLQ…RRKKKEPDSD (137 aa)) is interaction with LAMTOR5, important for protein stability. 2 disordered regions span residues 690–730 (GFPS…DAGE) and 749–786 (KQLE…PDSD). Over residues 693 to 705 (SGSQSRLSGTLKS) the composition is skewed to polar residues. Ser725 is subject to Phosphoserine. Basic and acidic residues predominate over residues 749–771 (KQLEKEWMTQQTEHNKEKTESGT).

It belongs to the helicase family. In terms of assembly, homodimer; in free form. Component of the mitochondrial degradosome (mtEXO) complex which is a heteropentamer containing 2 copies of SUPV3L1 and 3 copies of PNPT1. As part of mitochondrial degradosome complex, interacts with GRSF1 in a RNA-dependent manner; the interaction enhances the activity of the complex. Interacts with LAMTOR5/HBXIP, WRN and BLM. Requires Mg(2+) as cofactor. Mn(2+) serves as cofactor. In terms of tissue distribution, broadly expressed.

Its subcellular location is the nucleus. The protein resides in the mitochondrion matrix. The protein localises to the mitochondrion nucleoid. The enzyme catalyses ATP + H2O = ADP + phosphate + H(+). Helicase activity toward DNA substrate is inhibited by micromolar concentrations of 5,6-dichloro-1-(beta-D-ribofuranosyl)benzotriazole (DRBT) and 4,5,6,7-tetrabromobenzotriazole (TBBT). Helicase activity toward RNA substrate is inhibited by elevated concentrations of TBBT. Inhibited by some ring-expanded nucleoside analogs. Functionally, major helicase player in mitochondrial RNA metabolism. Component of the mitochondrial degradosome (mtEXO) complex, that degrades 3' overhang double-stranded RNA with a 3'-to-5' directionality in an ATP-dependent manner. Involved in the degradation of non-coding mitochondrial transcripts (MT-ncRNA) and tRNA-like molecules. ATPase and ATP-dependent multisubstrate helicase, able to unwind double-stranded (ds) DNA and RNA, and RNA/DNA heteroduplexes in the 5'-to-3' direction. Plays a role in the RNA surveillance system in mitochondria; regulates the stability of mature mRNAs, the removal of aberrantly formed mRNAs and the rapid degradation of non coding processing intermediates. Also implicated in recombination and chromatin maintenance pathways. May protect cells from apoptosis. Associates with mitochondrial DNA. This chain is ATP-dependent RNA helicase SUPV3L1, mitochondrial (SUPV3L1), found in Homo sapiens (Human).